The following is an 86-amino-acid chain: Small ribosomal subunit protein bS18 (86 aa).

It belongs to the bacterial ribosomal protein bS18 family. In terms of assembly, part of the 30S ribosomal subunit. Forms a tight heterodimer with protein bS6.

Its function is as follows. Binds as a heterodimer with protein bS6 to the central domain of the 16S rRNA, where it helps stabilize the platform of the 30S subunit. In Campylobacter lari (strain RM2100 / D67 / ATCC BAA-1060), this protein is Small ribosomal subunit protein bS18.